The following is a 147-amino-acid chain: MKALVILGLLFLSVAVQGKVFERCELARTLKKLGLDDYKGVSLANWLCLSKWESGYNTKATNYNPGSESTDYGIFQINSKWWCNDGKTPNAVDGCHVSCSALMENDIEKAVACAKHIVSEQGITAWVAWKSHCRVHDVSSYVEGCKL.

The N-terminal stretch at 1–18 (MKALVILGLLFLSVAVQG) is a signal peptide. Residues 19–147 (KVFERCELAR…VSSYVEGCKL (129 aa)) enclose the C-type lysozyme domain. 4 disulfide bridges follow: cysteine 24/cysteine 145, cysteine 48/cysteine 133, cysteine 83/cysteine 99, and cysteine 95/cysteine 113. Active-site residues include glutamate 53 and aspartate 71.

The protein belongs to the glycosyl hydrolase 22 family. As to quaternary structure, monomer. As to expression, expressed in stomach.

Its subcellular location is the secreted. The enzyme catalyses Hydrolysis of (1-&gt;4)-beta-linkages between N-acetylmuramic acid and N-acetyl-D-glucosamine residues in a peptidoglycan and between N-acetyl-D-glucosamine residues in chitodextrins.. Functionally, lysozymes have primarily a bacteriolytic function; those in tissues and body fluids are associated with the monocyte-macrophage system and enhance the activity of immunoagents. This Ovis aries (Sheep) protein is Lysozyme C-3.